A 745-amino-acid chain; its full sequence is Chitin synthase D (745 aa).

The next 5 helical transmembrane spans lie at 26–46 (LAHR…PVHL), 55–75 (VLML…IPWL), 412–432 (TTAL…SSIN), 434–454 (LPVG…FYLG), and 464–484 (LFPL…VYGI). 2 disordered regions span residues 613 to 635 (TGDN…SLHQ) and 672 to 745 (ILPH…ESMV). A compositionally biased stretch (polar residues) spans 707–720 (NASTRGSMEGNTPE).

It belongs to the chitin synthase family. Class VI subfamily.

It is found in the cell membrane. It carries out the reaction [(1-&gt;4)-N-acetyl-beta-D-glucosaminyl](n) + UDP-N-acetyl-alpha-D-glucosamine = [(1-&gt;4)-N-acetyl-beta-D-glucosaminyl](n+1) + UDP + H(+). Functionally, polymerizes chitin, a structural polymer of the cell wall and septum, by transferring the sugar moiety of UDP-GlcNAc to the non-reducing end of the growing chitin polymer. This is Chitin synthase D (chsD) from Aspergillus fumigatus (strain ATCC MYA-4609 / CBS 101355 / FGSC A1100 / Af293) (Neosartorya fumigata).